We begin with the raw amino-acid sequence, 231 residues long: uncharacterized protein (231 aa).

Residue 10 to 34 (IITGASSGIGAATAKALEKQGVKVV) coordinates NADP(+). A substrate-binding site is contributed by Ser140. Residue Tyr153 is the Proton acceptor of the active site.

The protein belongs to the short-chain dehydrogenases/reductases (SDR) family.

This is an uncharacterized protein from Staphylococcus haemolyticus (strain JCSC1435).